A 449-amino-acid polypeptide reads, in one-letter code: Glucose-6-phosphate isomerase (449 aa).

Catalysis depends on E291, which acts as the Proton donor. Catalysis depends on residues H312 and K426.

Belongs to the GPI family.

It localises to the cytoplasm. The enzyme catalyses alpha-D-glucose 6-phosphate = beta-D-fructose 6-phosphate. It participates in carbohydrate biosynthesis; gluconeogenesis. It functions in the pathway carbohydrate degradation; glycolysis; D-glyceraldehyde 3-phosphate and glycerone phosphate from D-glucose: step 2/4. Its function is as follows. Catalyzes the reversible isomerization of glucose-6-phosphate to fructose-6-phosphate. The protein is Glucose-6-phosphate isomerase of Clostridium botulinum (strain Alaska E43 / Type E3).